The chain runs to 2958 residues: Protein CSF1 (2958 aa).

Residues 1-17 are Cytoplasmic-facing; that stretch reads MEAISQLRGVPLTHQKD. The helical; Signal-anchor for type II membrane protein transmembrane segment at 18–38 threads the bilayer; it reads FSWVFLVDWILTVVVCLTMIF. Residues 39-2958 lie on the Extracellular side of the membrane; the sequence is YMGRIYAYLV…QYVKILDDTH (2920 aa). Residues Asn-82, Asn-117, Asn-144, Asn-271, Asn-478, Asn-530, Asn-816, Asn-821, Asn-839, and Asn-892 are each glycosylated (N-linked (GlcNAc...) asparagine). The disordered stretch occupies residues 813–834; sequence GYQNSSLKNESEDKGPMKRSDL. A compositionally biased stretch (basic and acidic residues) spans 821–834; the sequence is NESEDKGPMKRSDL. The disordered stretch occupies residues 1175–1196; sequence MEPSRASFSEDDNDEEADPSSF. A compositionally biased stretch (acidic residues) spans 1183 to 1192; that stretch reads SEDDNDEEAD. 13 N-linked (GlcNAc...) asparagine glycosylation sites follow: Asn-1309, Asn-1368, Asn-1453, Asn-1785, Asn-1921, Asn-2130, Asn-2146, Asn-2280, Asn-2337, Asn-2520, Asn-2578, Asn-2719, and Asn-2869.

The protein belongs to the CSF1 family. As to quaternary structure, interacts with MCD4; CSF1 channels phosphatidylethanolamine to MCD4 in the endoplasmic reticulum at contact sites to support GPI anchor biosynthesis.

The protein localises to the cell membrane. The protein resides in the endoplasmic reticulum membrane. It is found in the mitochondrion membrane. Its function is as follows. Tube-forming lipid transport protein which provides phosphatidylethanolamine for glycosylphosphatidylinositol (GPI) anchor synthesis in the endoplasmic reticulum. Required for the glucose and other nutrients uptake at low temperature. The polypeptide is Protein CSF1 (Saccharomyces cerevisiae (strain ATCC 204508 / S288c) (Baker's yeast)).